The primary structure comprises 510 residues: Bifunctional purine biosynthesis protein PurH (510 aa).

The 145-residue stretch at 1–145 (MTKRALLSVS…KNFAAVLPIV (145 aa)) folds into the MGS-like domain.

The protein belongs to the PurH family.

It carries out the reaction (6R)-10-formyltetrahydrofolate + 5-amino-1-(5-phospho-beta-D-ribosyl)imidazole-4-carboxamide = 5-formamido-1-(5-phospho-D-ribosyl)imidazole-4-carboxamide + (6S)-5,6,7,8-tetrahydrofolate. It catalyses the reaction IMP + H2O = 5-formamido-1-(5-phospho-D-ribosyl)imidazole-4-carboxamide. It functions in the pathway purine metabolism; IMP biosynthesis via de novo pathway; 5-formamido-1-(5-phospho-D-ribosyl)imidazole-4-carboxamide from 5-amino-1-(5-phospho-D-ribosyl)imidazole-4-carboxamide (10-formyl THF route): step 1/1. It participates in purine metabolism; IMP biosynthesis via de novo pathway; IMP from 5-formamido-1-(5-phospho-D-ribosyl)imidazole-4-carboxamide: step 1/1. The polypeptide is Bifunctional purine biosynthesis protein PurH (Lactiplantibacillus plantarum (strain ATCC BAA-793 / NCIMB 8826 / WCFS1) (Lactobacillus plantarum)).